Here is a 416-residue protein sequence, read N- to C-terminus: Tryptophan synthase beta chain (416 aa).

The residue at position 109 (Lys109) is an N6-(pyridoxal phosphate)lysine.

The protein belongs to the TrpB family. As to quaternary structure, tetramer of two alpha and two beta chains. Requires pyridoxal 5'-phosphate as cofactor.

The catalysed reaction is (1S,2R)-1-C-(indol-3-yl)glycerol 3-phosphate + L-serine = D-glyceraldehyde 3-phosphate + L-tryptophan + H2O. It participates in amino-acid biosynthesis; L-tryptophan biosynthesis; L-tryptophan from chorismate: step 5/5. Functionally, the beta subunit is responsible for the synthesis of L-tryptophan from indole and L-serine. The polypeptide is Tryptophan synthase beta chain (Synechococcus sp. (strain WH7803)).